Consider the following 175-residue polypeptide: Crossover junction endodeoxyribonuclease RuvC (175 aa).

Residues Asp-8, Glu-69, and Asp-141 contribute to the active site. 3 residues coordinate Mg(2+): Asp-8, Glu-69, and Asp-141.

It belongs to the RuvC family. Homodimer which binds Holliday junction (HJ) DNA. The HJ becomes 2-fold symmetrical on binding to RuvC with unstacked arms; it has a different conformation from HJ DNA in complex with RuvA. In the full resolvosome a probable DNA-RuvA(4)-RuvB(12)-RuvC(2) complex forms which resolves the HJ. Mg(2+) serves as cofactor.

It localises to the cytoplasm. It catalyses the reaction Endonucleolytic cleavage at a junction such as a reciprocal single-stranded crossover between two homologous DNA duplexes (Holliday junction).. The RuvA-RuvB-RuvC complex processes Holliday junction (HJ) DNA during genetic recombination and DNA repair. Endonuclease that resolves HJ intermediates. Cleaves cruciform DNA by making single-stranded nicks across the HJ at symmetrical positions within the homologous arms, yielding a 5'-phosphate and a 3'-hydroxyl group; requires a central core of homology in the junction. The consensus cleavage sequence is 5'-(A/T)TT(C/G)-3'. Cleavage occurs on the 3'-side of the TT dinucleotide at the point of strand exchange. HJ branch migration catalyzed by RuvA-RuvB allows RuvC to scan DNA until it finds its consensus sequence, where it cleaves and resolves the cruciform DNA. The chain is Crossover junction endodeoxyribonuclease RuvC from Colwellia psychrerythraea (strain 34H / ATCC BAA-681) (Vibrio psychroerythus).